Consider the following 461-residue polypeptide: Isthmin-1 (461 aa).

An N-terminal signal peptide occupies residues 1-26 (MVRLAAELLLLLGLLLLTLHITVLRS). Asn-33 is a glycosylation site (N-linked (GlcNAc...) asparagine). Residues 40-58 (QDSRVAENNVNADSSSSVQ) are compositionally biased toward polar residues. Disordered stretches follow at residues 40-62 (QDSR…LGPG), 73-92 (ASQP…RDGP), and 128-188 (EGSE…NFLK). Residues 131–141 (EPEKGMRKENK) are compositionally biased toward basic and acidic residues. Residues 156-165 (SSSSSSSSVS) show a composition bias toward low complexity. The TSP type-1 domain occupies 215–259 (DGEGDWSAWSPCSVSCGNGNQKRTRSCGYACTATESRTCDMPSCP). 3 disulfides stabilise this stretch: Cys-226–Cys-253, Cys-230–Cys-258, and Cys-241–Cys-245. An N-linked (GlcNAc...) asparagine glycan is attached at Asn-282. The region spanning 286 to 449 (LFGVDTDSCE…QKCAENPQDE (164 aa)) is the AMOP domain.

The protein belongs to the isthmin family.

It localises to the secreted. Functionally, may specifically influence certain angiogenesis process. This is Isthmin-1 (ism1) from Danio rerio (Zebrafish).